The following is a 244-amino-acid chain: MAEFNLAELNALPKSGQALSLAVVNGQLETLSAEQRVEWALEHLPGEFVLSSSFGIQAAVCLHLVTRIKPDIPVILTDTGYLFPETYQFIDQLADKLKLNLQVFRAEQSPAWQEARYGKLWEQGVEGIEKYNQINKVEPMNRALETLGGQTWFAGLRREQSGSRAHLPVLAVQRGVFKILPIIDWDNRKIYQYLTEHGLSYHPLWEQGYLSVGDTHTTQKWEPGMSEEETRFFGLKRECGLHEG.

The Nucleophile; cysteine thiosulfonate intermediate role is filled by Cys239.

Belongs to the PAPS reductase family. CysH subfamily.

It localises to the cytoplasm. The enzyme catalyses [thioredoxin]-disulfide + sulfite + adenosine 3',5'-bisphosphate + 2 H(+) = [thioredoxin]-dithiol + 3'-phosphoadenylyl sulfate. Its pathway is sulfur metabolism; hydrogen sulfide biosynthesis; sulfite from sulfate: step 3/3. Its function is as follows. Catalyzes the formation of sulfite from phosphoadenosine 5'-phosphosulfate (PAPS) using thioredoxin as an electron donor. The chain is Phosphoadenosine 5'-phosphosulfate reductase from Serratia proteamaculans (strain 568).